The chain runs to 315 residues: ATP synthase gamma chain (315 aa).

Belongs to the ATPase gamma chain family. In terms of assembly, F-type ATPases have 2 components, CF(1) - the catalytic core - and CF(0) - the membrane proton channel. CF(1) has five subunits: alpha(3), beta(3), gamma(1), delta(1), epsilon(1). CF(0) has three main subunits: a, b and c.

It is found in the cellular thylakoid membrane. In terms of biological role, produces ATP from ADP in the presence of a proton gradient across the membrane. The gamma chain is believed to be important in regulating ATPase activity and the flow of protons through the CF(0) complex. The protein is ATP synthase gamma chain of Synechococcus sp. (strain PCC 6716).